The sequence spans 208 residues: U11/U12 small nuclear ribonucleoprotein 35 kDa protein (208 aa).

One can recognise an RRM domain in the interval 50–128 (LTLFVARLNP…YELLVDVEQE (79 aa)). Residues 133 to 208 (GWRPRRLGGG…TEDRTHRHTY (76 aa)) form a disordered region. Positions 171-208 (RPAEPRGRETERERDRRDYRDRRHERTHTEDRTHRHTY) are enriched in basic and acidic residues.

The protein localises to the nucleus. In Danio rerio (Zebrafish), this protein is U11/U12 small nuclear ribonucleoprotein 35 kDa protein (snrnp35).